The primary structure comprises 218 residues: Peptide deformylase 1 (218 aa).

Fe cation contacts are provided by Cys126 and His168. Residue Glu169 is part of the active site. His172 serves as a coordination point for Fe cation.

The protein belongs to the polypeptide deformylase family. Fe(2+) is required as a cofactor.

The catalysed reaction is N-terminal N-formyl-L-methionyl-[peptide] + H2O = N-terminal L-methionyl-[peptide] + formate. Functionally, removes the formyl group from the N-terminal Met of newly synthesized proteins. Requires at least a dipeptide for an efficient rate of reaction. N-terminal L-methionine is a prerequisite for activity but the enzyme has broad specificity at other positions. The sequence is that of Peptide deformylase 1 from Streptomyces coelicolor (strain ATCC BAA-471 / A3(2) / M145).